A 453-amino-acid chain; its full sequence is Gastrin/cholecystokinin type B receptor (453 aa).

At 1–57 (MDLLKLNRSLQGPGPGSGSSLCRPGVSLLNSSSAGNLSCETPRIRGTGTRELELTIR) the chain is on the extracellular side. N-linked (GlcNAc...) asparagine glycans are attached at residues Asn7, Asn30, and Asn36. Residues 58 to 79 (ITLYAVIFLMSVGGNVLIIVVL) traverse the membrane as a helical segment. Residues 80–87 (GLSRRLRT) lie on the Cytoplasmic side of the membrane. The chain crosses the membrane as a helical span at residues 88 to 109 (VTNAFLLSLAVSDLLLAVACMP). Residues 110–131 (FTLLPNLMGTFIFGTVICKAVS) lie on the Extracellular side of the membrane. The cysteines at positions 127 and 205 are disulfide-linked. A helical transmembrane segment spans residues 132-150 (YLMGVSVSVSTLNLAAIAL). The Cytoplasmic segment spans residues 151–170 (ERYSAICRPLQARVWQTRSH). Residues 171-189 (AARVILATWLLSGLLMVPY) form a helical membrane-spanning segment. At 190 to 219 (PVYTVVQPVGPRILQCMHLWPSERVQQMWS) the chain is on the extracellular side. Residues 220–242 (VLLLILLFFIPGVVMAVAYGLIS) traverse the membrane as a helical segment. Residues 243 to 339 (RELYLGLRFD…KLLAKKRVVR (97 aa)) are Cytoplasmic-facing. The tract at residues 257–276 (SETQSRVRNQGGLPGGAAAP) is disordered. A helical membrane pass occupies residues 340 to 361 (MLLVIVLLFFVCWLPVYSANTW). At 362–379 (RAFDGPGARRALAGAPIS) the chain is on the extracellular side. Residues 380–400 (FIHLLSYTSACANPLVYCFMH) form a helical membrane-spanning segment. The Cytoplasmic segment spans residues 401–453 (RRFRQACLDTCARCCPRPPRARPRPLPDEDPPTPSIASLSRLSYTTISTLGPG). Cys414 is lipidated: S-palmitoyl cysteine.

Belongs to the G-protein coupled receptor 1 family.

Its subcellular location is the cell membrane. Receptor for gastrin and cholecystokinin. The CCK-B receptors occur throughout the central nervous system where they modulate anxiety, analgesia, arousal, and neuroleptic activity. This receptor mediates its action by association with G proteins that activate a phosphatidylinositol-calcium second messenger system. This chain is Gastrin/cholecystokinin type B receptor (Cckbr), found in Mus musculus (Mouse).